Reading from the N-terminus, the 214-residue chain is Calcineurin B homologous protein 3 (214 aa).

Positions 1-20 (MGAAHSASEEVRELEGKTGF) are disordered. Residue Gly-2 is the site of N-myristoyl glycine attachment. Over residues 7–16 (ASEEVRELEG) the composition is skewed to basic and acidic residues. The region spanning 110–145 (SRKEKLRFLFHMYDSDSDGRITLEEYRNVVEELLSG) is the EF-hand domain. 5 residues coordinate Ca(2+): Asp-123, Asp-125, Asp-127, Arg-129, and Glu-134.

Belongs to the calcineurin regulatory subunit family. CHP subfamily. In terms of assembly, monomer. Homodimer; disulfide-linked. Interacts with SLC9A1/NHE1; the interaction enables an optimal Na(+)/H(+) exchange activity. Expressed in mature megakaryocytes and polymorphonuclear granulocytes (at protein level). Abundantly expressed in heart. Also expressed at a lower level in adult testis and salivary gland, and in the placenta.

Its subcellular location is the nucleus. The protein localises to the cytoplasm. It is found in the membrane. It localises to the cell membrane. The protein resides in the cell projection. Its subcellular location is the lamellipodium. The protein localises to the ruffle membrane. Functions as an integral cofactor in cell pH regulation by controlling plasma membrane-type Na(+)/H(+) exchange activity. Promotes the maturation, transport, cell surface stability and exchange activity of SLC9A1/NHE1 at the plasma membrane. Promotes the induction of hematopoietic stem cell differentiation toward megakaryocytic lineage. Essential for the coupling of ERK cascade activation with the expression of ETS family genes in megakaryocytic differentiation. Also involved in granulocytic differentiation in a ERK-dependent manner. Inhibits the phosphatase activity of calcineurin. In Homo sapiens (Human), this protein is Calcineurin B homologous protein 3 (TESC).